The primary structure comprises 274 residues: E3 ubiquitin-protein ligase complex SLX5-SLX8 subunit SLX8 (274 aa).

2 disordered regions span residues 1–117 (MARR…GNNI) and 136–159 (ANTPSASPMLDAAPPTTKPGTNSK). Residues 13–28 (ENLRIKRVRLESVRQN) show a composition bias toward basic and acidic residues. Position 50 is a phosphoserine (Ser50). Thr66 bears the Phosphothreonine mark. The segment covering 66–75 (TSEEDGDDDL) has biased composition (acidic residues). Ser67 is modified (phosphoserine). A compositionally biased stretch (basic and acidic residues) spans 97–108 (GNHDRETMHTEE). The RING-type zinc-finger motif lies at 206 to 250 (CPICFEPPETALMTLCGHVFCCPCLFQMVNSSRTCRQFGHCALCR).

Component of the heterodimeric SUMO-targeted ubiquitin ligase (STUbL) complex composed of SLX5 and SLX8.

It localises to the nucleus. Its subcellular location is the chromosome. It is found in the centromere. The protein localises to the kinetochore. It carries out the reaction S-ubiquitinyl-[E2 ubiquitin-conjugating enzyme]-L-cysteine + [acceptor protein]-L-lysine = [E2 ubiquitin-conjugating enzyme]-L-cysteine + N(6)-ubiquitinyl-[acceptor protein]-L-lysine.. Its pathway is protein modification; protein ubiquitination. Its function is as follows. Component of the SUMO-targeted ubiquitin ligase (STUbL) complex SLX5/SLX8 that mediates ubiquitination and subsequent desumoylation of sumoylated proteins and proteins containing SUMO-like domains for their degradation. The STUbL complex SLX5/SLX8 stimulates ubiquitin conjugating enzymes, including UBC1, UBC4, UBC5 and UBC13-MMS2, and mediates the proteolytic down-regulation of sumoylated proteins. The STUbL complex SLX5/SLX8 is involved in ubiquitin-mediated degradation of histone variant CSE4, preventing mislocalization to euchromatin. The complex plays an essential role in maintenance of chromosome stability and links SUMO-dependent ubiquitination to a centromere-specific function during mitosis. The complex is involved in proteolysis of spindle positioning protein KAR9 and ensures correct spindle function by regulating levels of microtubule-associated proteins. During replication, the complex helps to prevent DNA lesions via recombination and has a role in localizing the DNA damage protein DCD2. The complex especially ubiquitinates the nuclease YEN1 and prevents persistent accumulation of a fraction of YEN1 associated with sites of activity in late G2/M and helps maintain the balance between pro- and anti-crossover pathways during homologous recombination. It is also involved in ubiquitin-mediated degradation of DNA repair proteins RAD52 and RAD57. Finally, the complex is recruited to distinct genomic hotspots of non-H2B protein ubiquitination (ub-hotspots) by the sumoylated transcription factor-like protein EUC1 where it ubiquitinates EUC1 and presumably other targets. This chain is E3 ubiquitin-protein ligase complex SLX5-SLX8 subunit SLX8 (SLX8), found in Saccharomyces cerevisiae (strain ATCC 204508 / S288c) (Baker's yeast).